The sequence spans 449 residues: NADH-quinone oxidoreductase subunit H (449 aa).

Transmembrane regions (helical) follow at residues 23–43, 93–113, 137–157, 176–196, 209–229, 258–280, 300–320, 332–352, and 368–388; these read WWVI…LTLF, AVYL…FSVI, VAVL…VLGG, MISY…YAGS, LWYG…MVGE, ALFF…TLFL, YWPL…FIWL, FMAF…VAVA, and LLIG…IGGA. Residues 427–442 are compositionally biased toward polar residues; sequence RSSPIASSMPQPSAAT. The disordered stretch occupies residues 427–449; that stretch reads RSSPIASSMPQPSAATRSAGEEI.

Belongs to the complex I subunit 1 family. In terms of assembly, NDH-1 is composed of 14 different subunits. Subunits NuoA, H, J, K, L, M, N constitute the membrane sector of the complex.

It localises to the cell membrane. The catalysed reaction is a quinone + NADH + 5 H(+)(in) = a quinol + NAD(+) + 4 H(+)(out). Functionally, NDH-1 shuttles electrons from NADH, via FMN and iron-sulfur (Fe-S) centers, to quinones in the respiratory chain. The immediate electron acceptor for the enzyme in this species is believed to be ubiquinone. Couples the redox reaction to proton translocation (for every two electrons transferred, four hydrogen ions are translocated across the cytoplasmic membrane), and thus conserves the redox energy in a proton gradient. This subunit may bind ubiquinone. The polypeptide is NADH-quinone oxidoreductase subunit H (Nocardioides sp. (strain ATCC BAA-499 / JS614)).